The following is a 305-amino-acid chain: UDP-3-O-acyl-N-acetylglucosamine deacetylase (305 aa).

Positions 79, 238, and 242 each coordinate Zn(2+). The active-site Proton donor is histidine 265.

It belongs to the LpxC family. The cofactor is Zn(2+).

It carries out the reaction a UDP-3-O-[(3R)-3-hydroxyacyl]-N-acetyl-alpha-D-glucosamine + H2O = a UDP-3-O-[(3R)-3-hydroxyacyl]-alpha-D-glucosamine + acetate. It participates in glycolipid biosynthesis; lipid IV(A) biosynthesis; lipid IV(A) from (3R)-3-hydroxytetradecanoyl-[acyl-carrier-protein] and UDP-N-acetyl-alpha-D-glucosamine: step 2/6. In terms of biological role, catalyzes the hydrolysis of UDP-3-O-myristoyl-N-acetylglucosamine to form UDP-3-O-myristoylglucosamine and acetate, the committed step in lipid A biosynthesis. In Klebsiella pneumoniae (strain 342), this protein is UDP-3-O-acyl-N-acetylglucosamine deacetylase.